The following is a 487-amino-acid chain: N-succinylglutamate 5-semialdehyde dehydrogenase (487 aa).

NAD(+) is bound at residue 221 to 226 (GSSDTG). Catalysis depends on residues E244 and C278.

This sequence belongs to the aldehyde dehydrogenase family. AstD subfamily.

The catalysed reaction is N-succinyl-L-glutamate 5-semialdehyde + NAD(+) + H2O = N-succinyl-L-glutamate + NADH + 2 H(+). The protein operates within amino-acid degradation; L-arginine degradation via AST pathway; L-glutamate and succinate from L-arginine: step 4/5. Functionally, catalyzes the NAD-dependent reduction of succinylglutamate semialdehyde into succinylglutamate. The protein is N-succinylglutamate 5-semialdehyde dehydrogenase of Paraburkholderia xenovorans (strain LB400).